The sequence spans 415 residues: 3-isopropylmalate dehydratase large subunit (415 aa).

3 residues coordinate [4Fe-4S] cluster: Cys-295, Cys-353, and Cys-356.

Belongs to the aconitase/IPM isomerase family. LeuC type 2 subfamily. Heterodimer of LeuC and LeuD. It depends on [4Fe-4S] cluster as a cofactor.

It carries out the reaction (2R,3S)-3-isopropylmalate = (2S)-2-isopropylmalate. Its pathway is amino-acid biosynthesis; L-leucine biosynthesis; L-leucine from 3-methyl-2-oxobutanoate: step 2/4. Functionally, catalyzes the isomerization between 2-isopropylmalate and 3-isopropylmalate, via the formation of 2-isopropylmaleate. This is 3-isopropylmalate dehydratase large subunit from Pyrobaculum neutrophilum (strain DSM 2338 / JCM 9278 / NBRC 100436 / V24Sta) (Thermoproteus neutrophilus).